The sequence spans 107 residues: MMTRKPTSVGEILQEEFLEPLSLKISDLAQILDVHRNTASNIVNNSSRITLEMAVKLAKVFDTTPEFWLNLQTRIDLWDLEHNKRFQQSLANVKPALHRHDTSTFAM.

Positions 13-68 (LQEEFLEPLSLKISDLAQILDVHRNTASNIVNNSSRITLEMAVKLAKVFDTTPEFW) constitute an HTH cro/C1-type domain. Residues 24 to 43 (KISDLAQILDVHRNTASNIV) constitute a DNA-binding region (H-T-H motif).

This sequence belongs to the VapA/VapI family.

This is an uncharacterized protein from Haemophilus influenzae (strain ATCC 51907 / DSM 11121 / KW20 / Rd).